The primary structure comprises 878 residues: Leucine--tRNA ligase (878 aa).

The 'HIGH' region motif lies at 43-54 (PYPSAQGLHVGH). Positions 634–638 (KMSKA) match the 'KMSKS' region motif. Residue Lys-637 participates in ATP binding.

The protein belongs to the class-I aminoacyl-tRNA synthetase family.

The protein localises to the cytoplasm. The enzyme catalyses tRNA(Leu) + L-leucine + ATP = L-leucyl-tRNA(Leu) + AMP + diphosphate. The chain is Leucine--tRNA ligase from Treponema pallidum subsp. pallidum (strain SS14).